Reading from the N-terminus, the 459-residue chain is ATP synthase subunit beta (459 aa).

149 to 156 (GGAGVGKT) provides a ligand contact to ATP.

The protein belongs to the ATPase alpha/beta chains family. As to quaternary structure, F-type ATPases have 2 components, CF(1) - the catalytic core - and CF(0) - the membrane proton channel. CF(1) has five subunits: alpha(3), beta(3), gamma(1), delta(1), epsilon(1). CF(0) has three main subunits: a(1), b(2) and c(9-12). The alpha and beta chains form an alternating ring which encloses part of the gamma chain. CF(1) is attached to CF(0) by a central stalk formed by the gamma and epsilon chains, while a peripheral stalk is formed by the delta and b chains.

It is found in the cell inner membrane. The catalysed reaction is ATP + H2O + 4 H(+)(in) = ADP + phosphate + 5 H(+)(out). Produces ATP from ADP in the presence of a proton gradient across the membrane. The catalytic sites are hosted primarily by the beta subunits. This Pseudomonas savastanoi pv. phaseolicola (strain 1448A / Race 6) (Pseudomonas syringae pv. phaseolicola (strain 1448A / Race 6)) protein is ATP synthase subunit beta.